The chain runs to 181 residues: Cell division protein SepF (181 aa).

Residues 18–27 (EDYLDDDDYD) show a composition bias toward acidic residues. Residues 18–42 (EDYLDDDDYDDGRAVGHDDRRAMHE) are disordered. Positions 28–42 (DGRAVGHDDRRAMHE) are enriched in basic and acidic residues.

It belongs to the SepF family. As to quaternary structure, homodimer. Interacts with FtsZ.

It is found in the cytoplasm. Cell division protein that is part of the divisome complex and is recruited early to the Z-ring. Probably stimulates Z-ring formation, perhaps through the cross-linking of FtsZ protofilaments. Its function overlaps with FtsA. This Frankia alni (strain DSM 45986 / CECT 9034 / ACN14a) protein is Cell division protein SepF.